Consider the following 497-residue polypeptide: MVNTIGFDREKYIEMQSQHIRERREALGGKLYLEMGGKLFDDMHASRVLPGFTPDNKIAMLDRIKDEVEILVCINAKDLERHKIRADLGISYEEDVLRLVDVFRDRGFLVEHVVLTQLENDNRLALAFIERLQRLGIKVSRHRVIPGYPTDMDRIVSDEGFGLNEYAETTRDLVVVTAPGPGSGKLATCLSQVYHEHKRGVAAGYAKFETFPIWNLPLEHPVNLAYEAATVDLNDANVIDHFHLAAYGEQTVNYNRDVEAFPLLKTLLERLMGESPYQSPTDMGVNMAGNCISDDAACRHASEQEIIRRYFKALVEEARTGKDSTQSDRAAVVMAKAGIKASQRVVVEPARQVEERTSLPGCAIELVDGSIITGATSDLLGCSSSMLLNALKHLAGIDDAIHLLSPESIEPIQTLKTVHLGSSNPRLHTDEVLIALSVSAATDSNAQKALDQLKNLRGCDVHTTTILGSVDEGIFRNLGVLVTSDPKFQKNKLYQKR.

It belongs to the UPF0371 family.

This chain is UPF0371 protein DIP2346, found in Corynebacterium diphtheriae (strain ATCC 700971 / NCTC 13129 / Biotype gravis).